The following is a 1286-amino-acid chain: 5-oxoprolinase (1286 aa).

2 positions are modified to phosphoserine: serine 930 and serine 1077.

This sequence belongs to the oxoprolinase family. As to quaternary structure, homodimer.

It is found in the cytoplasm. The catalysed reaction is 5-oxo-L-proline + ATP + 2 H2O = L-glutamate + ADP + phosphate + H(+). Catalyzes the cleavage of 5-oxo-L-proline to form L-glutamate coupled to the hydrolysis of ATP to ADP and inorganic phosphate. The sequence is that of 5-oxoprolinase (OXP1) from Saccharomyces cerevisiae (strain ATCC 204508 / S288c) (Baker's yeast).